Reading from the N-terminus, the 92-residue chain is Small ribosomal subunit protein uS19c (92 aa).

The protein belongs to the universal ribosomal protein uS19 family.

It is found in the plastid. It localises to the chloroplast. Functionally, protein S19 forms a complex with S13 that binds strongly to the 16S ribosomal RNA. This is Small ribosomal subunit protein uS19c from Eucalyptus globulus subsp. globulus (Tasmanian blue gum).